The primary structure comprises 68 residues: Conotoxin Eb11.7 (68 aa).

The N-terminal stretch at 1–26 (MMFRLTSVSCFLLVIVCLNLFQVVLT) is a signal peptide. Cystine bridges form between cysteine 29–cysteine 43, cysteine 36–cysteine 48, cysteine 42–cysteine 52, and cysteine 47–cysteine 56. At phenylalanine 60 the chain carries Phenylalanine amide. Residues 64–68 (ATFQE) constitute a propeptide that is removed on maturation.

This sequence belongs to the conotoxin I2 superfamily. Expressed by the venom duct.

It is found in the secreted. This is Conotoxin Eb11.7 from Conus eburneus (Ivory cone).